The primary structure comprises 572 residues: Triacylglycerol lipase OBL1 (572 aa).

Residues 110–130 form a helical membrane-spanning segment; the sequence is GYLVEFFLNLFSLNGNFLGLL. Residues 320–356 are disordered; it reads IPPSESSKSSTSFSDSDAHTGSDLSSDSERPTDTRKK. Positions 323 to 334 are enriched in low complexity; that stretch reads SESSKSSTSFSD. Basic and acidic residues predominate over residues 346–356; it reads DSERPTDTRKK. Positions 391 to 395 match the GXSXG motif; it reads GHSLG. The Nucleophile role is filled by Ser393. Residues Asp457 and His550 each act as charge relay system in the active site.

It belongs to the AB hydrolase superfamily. Lipase family. As to expression, expressed in pollen grains and pollen tubes.

The protein localises to the lipid droplet. It localises to the membrane. It carries out the reaction 1,2-di-(9Z-octadecenoyl)-glycerol + (9Z)-octadecenoate + H(+) = 1,2,3-tri-(9Z-octadecenoyl)-glycerol + H2O. The catalysed reaction is 1-(9Z-octadecenoyl)-glycerol + H2O = glycerol + (9Z)-octadecenoate + H(+). Functionally, acid lipase that can hydrolyze a range of triacylglycerols without a clear preference for acyl-chains. Can also cleave 1,2-diacylglycerol, 1,3-diacylglycerol and 1-monoacylglycerol, but not phosphatidylcholine, phosphatidylethanolamine, or sterol esters. Required for pollen tube growth. Triacylglycerol hydrolysis by OBL1 may provide acyl groups for the synthesis of membrane lipids in growing pollen tubes. This is Triacylglycerol lipase OBL1 from Nicotiana tabacum (Common tobacco).